Consider the following 184-residue polypeptide: uncharacterized protein (184 aa).

A disordered region spans residues 130–149; the sequence is DKDDDKKKKKKDDKKDDPCN.

Its subcellular location is the virion. This is an uncharacterized protein from Acanthamoeba polyphaga (Amoeba).